The following is a 257-amino-acid chain: Pyridoxine 5'-phosphate synthase (257 aa).

A 3-amino-2-oxopropyl phosphate-binding site is contributed by Asn-16. Residue 18–19 (DH) coordinates 1-deoxy-D-xylulose 5-phosphate. Arg-27 is a 3-amino-2-oxopropyl phosphate binding site. The Proton acceptor role is filled by His-52. 1-deoxy-D-xylulose 5-phosphate contacts are provided by Arg-54 and His-59. The active-site Proton acceptor is the Glu-79. Thr-109 contributes to the 1-deoxy-D-xylulose 5-phosphate binding site. The Proton donor role is filled by His-200. 3-amino-2-oxopropyl phosphate is bound by residues Gly-201 and 222-223 (GH).

This sequence belongs to the PNP synthase family. As to quaternary structure, homooctamer; tetramer of dimers.

It localises to the cytoplasm. The enzyme catalyses 3-amino-2-oxopropyl phosphate + 1-deoxy-D-xylulose 5-phosphate = pyridoxine 5'-phosphate + phosphate + 2 H2O + H(+). Its pathway is cofactor biosynthesis; pyridoxine 5'-phosphate biosynthesis; pyridoxine 5'-phosphate from D-erythrose 4-phosphate: step 5/5. Functionally, catalyzes the complicated ring closure reaction between the two acyclic compounds 1-deoxy-D-xylulose-5-phosphate (DXP) and 3-amino-2-oxopropyl phosphate (1-amino-acetone-3-phosphate or AAP) to form pyridoxine 5'-phosphate (PNP) and inorganic phosphate. The sequence is that of Pyridoxine 5'-phosphate synthase from Burkholderia pseudomallei (strain 1710b).